The following is a 765-amino-acid chain: Protein PAT1 homolog 1 (765 aa).

Disordered stretches follow at residues 1–98, 119–147, and 210–244; these read MFRF…DERG, GVGSTSSDRSHLPPMLSAHPPHPSALAGP, and LPNRPPSLSRDEGRDLSERVPPPRSSSPVIGSPPV. Residues 7–30 show a composition bias toward acidic residues; sequence LDDDCTLEEEEGLVEEEDEIDQFN. Positions 45–59 are enriched in basic and acidic residues; that stretch reads EEHTRLAELDERVRD. The span at 218-227 shows a compositional bias: basic and acidic residues; it reads SRDEGRDLSE. Phosphoserine is present on residues Ser235 and Ser236. Positions 235–244 are enriched in low complexity; sequence SSPVIGSPPV.

The protein belongs to the PAT1 family. As to quaternary structure, interacts with ribonucleoprotein complex components.

The protein resides in the cytoplasm. It localises to the P-body. The protein localises to the nucleus. Its subcellular location is the PML body. It is found in the nucleus speckle. RNA-binding protein involved in deadenylation-dependent decapping of mRNAs, leading to the degradation of mRNAs. Acts as a scaffold protein that connects deadenylation and decapping machinery. Required for cytoplasmic mRNA processing body (P-body) assembly. The sequence is that of Protein PAT1 homolog 1 (patl1) from Danio rerio (Zebrafish).